We begin with the raw amino-acid sequence, 201 residues long: Proteasome subunit beta type-2 (201 aa).

The residue at position 1 (Met-1) is an N-acetylmethionine.

This sequence belongs to the peptidase T1B family. As to quaternary structure, the 26S proteasome consists of a 20S proteasome core and two 19S regulatory subunits. The 20S proteasome core is a barrel-shaped complex made of 28 subunits that are arranged in four stacked rings. The two outer rings are each formed by seven alpha subunits, and the two inner rings are formed by seven beta subunits. The proteolytic activity is exerted by three beta-subunits PSMB5, PSMB6 and PSMB7. Detected in liver (at protein level).

The protein resides in the cytoplasm. The protein localises to the nucleus. Non-catalytic component of the 20S core proteasome complex involved in the proteolytic degradation of most intracellular proteins. This complex plays numerous essential roles within the cell by associating with different regulatory particles. Associated with two 19S regulatory particles, forms the 26S proteasome and thus participates in the ATP-dependent degradation of ubiquitinated proteins. The 26S proteasome plays a key role in the maintenance of protein homeostasis by removing misfolded or damaged proteins that could impair cellular functions, and by removing proteins whose functions are no longer required. Associated with the PA200 or PA28, the 20S proteasome mediates ubiquitin-independent protein degradation. This type of proteolysis is required in several pathways including spermatogenesis (20S-PA200 complex) or generation of a subset of MHC class I-presented antigenic peptides (20S-PA28 complex). This chain is Proteasome subunit beta type-2 (Psmb2), found in Mus musculus (Mouse).